Reading from the N-terminus, the 126-residue chain is Small ribosomal subunit protein uS13c (126 aa).

The disordered stretch occupies residues 100–126 (GQRTRTNARTRRGARQTVAGKKKAPSK). Over residues 101-126 (QRTRTNARTRRGARQTVAGKKKAPSK) the composition is skewed to basic residues.

Belongs to the universal ribosomal protein uS13 family. Part of the 30S ribosomal subunit.

It is found in the plastid. Its subcellular location is the cyanelle. Functionally, located at the top of the head of the 30S subunit, it contacts several helices of the 16S rRNA. This Cyanophora paradoxa protein is Small ribosomal subunit protein uS13c.